A 349-amino-acid chain; its full sequence is Isopentenyl-diphosphate delta-isomerase (349 aa).

Substrate is bound at residue 12 to 13 (RK). Residues 69–71 (GMT), serine 99, and asparagine 128 each bind FMN. Glutamine 158 is a substrate binding site. Residue glutamate 159 coordinates Mg(2+). FMN contacts are provided by residues lysine 189, serine 214, threonine 219, 265-267 (GIR), and 286-287 (SG).

The protein belongs to the IPP isomerase type 2 family. In terms of assembly, homooctamer. Dimer of tetramers. FMN is required as a cofactor. It depends on NADPH as a cofactor. The cofactor is Mg(2+).

The protein localises to the cytoplasm. The enzyme catalyses isopentenyl diphosphate = dimethylallyl diphosphate. Functionally, involved in the biosynthesis of isoprenoids. Catalyzes the 1,3-allylic rearrangement of the homoallylic substrate isopentenyl (IPP) to its allylic isomer, dimethylallyl diphosphate (DMAPP). In Latilactobacillus sakei subsp. sakei (strain 23K) (Lactobacillus sakei subsp. sakei), this protein is Isopentenyl-diphosphate delta-isomerase.